Reading from the N-terminus, the 329-residue chain is Cytosolic arginine sensor for mTORC1 subunit 2 (329 aa).

ACT domains lie at 72–140 (ADAT…HTLS) and 262–322 (ELWK…SALK).

It belongs to the GATS family. In terms of assembly, forms homodimers and heterodimers with CASTOR1. Interacts with the GATOR2 complex which is composed of MIOS, SEC13, SEH1L, WDR24 and WDR59; the interaction is not regulated by arginine. As to expression, widely expressed.

It localises to the cytoplasm. Its subcellular location is the cytosol. In terms of biological role, functions as a negative regulator of the TORC1 signaling pathway through the GATOR complex. As part of homodimers or heterodimers with CASTOR1, directly binds and inhibits the GATOR subcomplex GATOR2 and thereby mTORC1. Does not directly bind arginine, but binding of arginine to CASTOR1 disrupts the interaction of CASTOR2-containing heterodimers with GATOR2 which can in turn activate mTORC1 and the TORC1 signaling pathway. In Homo sapiens (Human), this protein is Cytosolic arginine sensor for mTORC1 subunit 2.